Consider the following 430-residue polypeptide: CinA-like protein (430 aa).

It belongs to the CinA family.

This chain is CinA-like protein, found in Prochlorococcus marinus (strain NATL2A).